Here is a 203-residue protein sequence, read N- to C-terminus: Probable NADPH:quinone oxidoreductase 2 (203 aa).

The protein belongs to the SsuE family. In terms of assembly, homotetramer. FMN serves as cofactor.

The catalysed reaction is a quinone + NADH + H(+) = a quinol + NAD(+). The enzyme catalyses a quinone + NADPH + H(+) = a quinol + NADP(+). The enzyme apparently serves as a quinone reductase in connection with conjugation reactions of hydroquinones involved in detoxification pathways. The polypeptide is Probable NADPH:quinone oxidoreductase 2 (Oryza sativa subsp. japonica (Rice)).